The chain runs to 262 residues: Zinc-finger homeodomain protein 6 (262 aa).

Basic and acidic residues-rich tracts occupy residues 1–25 (MEVREKKDEKMEMTRRKSSALDHHR) and 36–47 (NKEKPTTKRNGS). The disordered stretch occupies residues 1–93 (MEVREKKDEK…ECQKNHAASS (93 aa)). The ZF-HD dimerization-type; degenerate zinc finger occupies 82-131 (YRECQKNHAASSGGHVVDGCGEFMSSGEEGTVESLLCAACDCHRSFHRKE). Positions 198 to 261 (KKRFRTKFNE…NNKQAAKKKD (64 aa)) form a DNA-binding region, homeobox.

Homo- and heterodimer with other ZFHD proteins. Interacts with MIF1 and MIF3; these interactions prevent nuclear localization and DNA-binding to inhibit transcription regulation activity. Binds to ZHD1, ZHD2, ZHD10 and ZHD11. As to expression, expressed in seedlings, roots, leaves, stems, flowers and inflorescence.

It is found in the nucleus. In terms of biological role, putative transcription factor. The protein is Zinc-finger homeodomain protein 6 (ZHD6) of Arabidopsis thaliana (Mouse-ear cress).